Reading from the N-terminus, the 239-residue chain is Myogenic factor 6 (239 aa).

The disordered stretch occupies residues 28 to 64 (HLDMSGVSPLYNGNDSPLSPGQDNVPSETGGESSGDE). The span at 38–58 (YNGNDSPLSPGQDNVPSETGG) shows a compositional bias: polar residues. The bHLH domain occupies 96–147 (DRRKAATLRERRRLKKINEAFDALKRKTVANPNQRLPKVEILRSAISYIERL). A disordered region spans residues 155–189 (DEQERSQSGASDTRNDKEQNRPSGGDYRWKKASNT).

As to quaternary structure, efficient DNA binding requires dimerization with another bHLH protein.

Its subcellular location is the nucleus. In terms of biological role, involved in muscle differentiation (myogenic factor). Induces fibroblasts to differentiate into myoblasts. Probable sequence specific DNA-binding protein. In Takifugu rubripes (Japanese pufferfish), this protein is Myogenic factor 6 (myf6).